We begin with the raw amino-acid sequence, 262 residues long: MQTIIRVEKLAKTFNQHQALHAVDLNIHHGEMVALLGPSGSGKSTLLRHLSGLITGDKSVGSHIELLGRTVQREGRLARDIRKSRAHTGYIFQQFNLVNRLSVLENVLIGALGSTPFWRTCFSYFTREQKQRALQALTRVGMVHFAHQRVSTLSGGQQQRVAIARALMQQAKVILADEPIASLDPESARIVMDTLRDINQNDGITVVVTLHQVDYALRYCERIVALRQGHVFYDGCSQLFDNERFDHLYRSINRVEENAKAA.

Residues 5-253 enclose the ABC transporter domain; the sequence is IRVEKLAKTF…RFDHLYRSIN (249 aa). 37–44 contacts ATP; that stretch reads GPSGSGKS.

Belongs to the ABC transporter superfamily. Phosphonates importer (TC 3.A.1.9.1) family. As to quaternary structure, the complex is composed of two ATP-binding proteins (PhnC), two transmembrane proteins (PhnE) and a solute-binding protein (PhnD).

The protein resides in the cell inner membrane. The catalysed reaction is phosphonate(out) + ATP + H2O = phosphonate(in) + ADP + phosphate + H(+). Part of the ABC transporter complex PhnCDE involved in phosphonates import. Responsible for energy coupling to the transport system. The chain is Phosphonates import ATP-binding protein PhnC from Escherichia coli O6:H1 (strain CFT073 / ATCC 700928 / UPEC).